A 474-amino-acid chain; its full sequence is tRNA-2-methylthio-N(6)-dimethylallyladenosine synthase (474 aa).

Positions 3 to 120 (KKLHIKTWGC…LPEMINSVRG (118 aa)) constitute an MTTase N-terminal domain. C12, C49, C83, C157, C161, and C164 together coordinate [4Fe-4S] cluster. One can recognise a Radical SAM core domain in the interval 143–375 (RAEGPTAFVS…QERINQQAMA (233 aa)). The region spanning 378 to 441 (RRMLGTVQRI…TNSLRGKIVR (64 aa)) is the TRAM domain.

This sequence belongs to the methylthiotransferase family. MiaB subfamily. In terms of assembly, monomer. [4Fe-4S] cluster is required as a cofactor.

Its subcellular location is the cytoplasm. The enzyme catalyses N(6)-dimethylallyladenosine(37) in tRNA + (sulfur carrier)-SH + AH2 + 2 S-adenosyl-L-methionine = 2-methylsulfanyl-N(6)-dimethylallyladenosine(37) in tRNA + (sulfur carrier)-H + 5'-deoxyadenosine + L-methionine + A + S-adenosyl-L-homocysteine + 2 H(+). Its function is as follows. Catalyzes the methylthiolation of N6-(dimethylallyl)adenosine (i(6)A), leading to the formation of 2-methylthio-N6-(dimethylallyl)adenosine (ms(2)i(6)A) at position 37 in tRNAs that read codons beginning with uridine. This chain is tRNA-2-methylthio-N(6)-dimethylallyladenosine synthase, found in Klebsiella pneumoniae subsp. pneumoniae (strain ATCC 700721 / MGH 78578).